A 171-amino-acid chain; its full sequence is MNEEKEESPSTEAEGAGAEVVNWEERAETYRNDYLRALADIENLRKRHEKQVEDARNYAVDRFARELLPVVDSLELALASPVEGAESIALLRQGLENTLTLFAKALGKAGIAPIEMGEGRFDPHLHQAIAMVETEGEANRVLAVHQKGYVMHDRLLRPSMVSVSKAPKAAQ.

The interval 1–20 is disordered; the sequence is MNEEKEESPSTEAEGAGAEV.

It belongs to the GrpE family. In terms of assembly, homodimer.

It localises to the cytoplasm. Its function is as follows. Participates actively in the response to hyperosmotic and heat shock by preventing the aggregation of stress-denatured proteins, in association with DnaK and GrpE. It is the nucleotide exchange factor for DnaK and may function as a thermosensor. Unfolded proteins bind initially to DnaJ; upon interaction with the DnaJ-bound protein, DnaK hydrolyzes its bound ATP, resulting in the formation of a stable complex. GrpE releases ADP from DnaK; ATP binding to DnaK triggers the release of the substrate protein, thus completing the reaction cycle. Several rounds of ATP-dependent interactions between DnaJ, DnaK and GrpE are required for fully efficient folding. This chain is Protein GrpE, found in Acidithiobacillus ferrooxidans (strain ATCC 23270 / DSM 14882 / CIP 104768 / NCIMB 8455) (Ferrobacillus ferrooxidans (strain ATCC 23270)).